Consider the following 180-residue polypeptide: Minor allergen Can f 2 (180 aa).

Positions 1–18 (MQLLLLTVGLALICGLQA) are cleaved as a signal peptide. A glycan (N-linked (GlcNAc...) asparagine) is linked at asparagine 45. An intrachain disulfide couples cysteine 82 to cysteine 175.

The protein belongs to the calycin superfamily. Lipocalin family. As to expression, tongue epithelial tissue and parotid gland.

It localises to the secreted. This Canis lupus familiaris (Dog) protein is Minor allergen Can f 2.